The following is an 88-amino-acid chain: MIKNAFISFQEKKEENRGSVEFQVLSFTNKIRRLTSHLELHRKDFLSQRGLRKILGKRQRLLAYLSKKNRVRYKELINQLNIRELKTR.

Belongs to the universal ribosomal protein uS15 family. As to quaternary structure, part of the 30S ribosomal subunit.

The protein resides in the plastid. It localises to the chloroplast. In Arabis hirsuta (Hairy rock-cress), this protein is Small ribosomal subunit protein uS15c (rps15).